Here is a 354-residue protein sequence, read N- to C-terminus: Small ribosomal subunit protein uS2 (354 aa).

The protein belongs to the universal ribosomal protein uS2 family.

The polypeptide is Small ribosomal subunit protein uS2 (Methylorubrum populi (strain ATCC BAA-705 / NCIMB 13946 / BJ001) (Methylobacterium populi)).